We begin with the raw amino-acid sequence, 428 residues long: Histidinol dehydrogenase (428 aa).

NAD(+) contacts are provided by Tyr126, Gln188, and Asn211. Residues Ser234, Gln256, and His259 each coordinate substrate. Gln256 and His259 together coordinate Zn(2+). Catalysis depends on proton acceptor residues Glu324 and His325. Substrate-binding residues include His325, Asp358, Glu412, and His417. Zn(2+) is bound at residue Asp358. His417 is a Zn(2+) binding site.

The protein belongs to the histidinol dehydrogenase family. It depends on Zn(2+) as a cofactor.

It carries out the reaction L-histidinol + 2 NAD(+) + H2O = L-histidine + 2 NADH + 3 H(+). It participates in amino-acid biosynthesis; L-histidine biosynthesis; L-histidine from 5-phospho-alpha-D-ribose 1-diphosphate: step 9/9. Its function is as follows. Catalyzes the sequential NAD-dependent oxidations of L-histidinol to L-histidinaldehyde and then to L-histidine. The sequence is that of Histidinol dehydrogenase from Chlorobaculum tepidum (strain ATCC 49652 / DSM 12025 / NBRC 103806 / TLS) (Chlorobium tepidum).